A 1176-amino-acid chain; its full sequence is MTSSGKVRIYELSKDLGLENKDVLDAAEKLSIAAKSHSSSISDSEAGKIRSLLGKGASPSQPTAPAAKPAPAKPAAGKSILSVKKAPASPGVTAPVAAAKPQAPAQPAASKPLQPSVKAVAPPARPAPAGSTSAGSTPNKPATAPARPTAATTTSTPRPAAAAAPSRPAPSKPQGAPKPQVVGKPSAPELVSKPTPATKPTGAAKPAIVSKPITAAKPAVVAKPAAAKPTIVKPTAPTPRPASSPAAASSAPPPASTPRPAPSRPTPRPAAAPSRPGAPQGQKPQIVSRAGAPPRPGTPPRVGAPTKTGTPARPTPRPELVGKPVPRRTGGVGAPQRPGTGVPQRQGGPARPGAPTRTGKPGAPTRPGGNTLELVGKPIRRDGSSASGRPGAPTRPGAPTRPGMPGGMRKPVAPGELMQLQKPISRPAAPAPRRPDAPNRPTEAAGTATPPVARPTAPSAPRRPGFRPGAPGGQRRPGRPDWDDSAKLEALRSRSPQKQRQKVHIIGENDDALAAQTGGFAGEQQAMVLSASLARPAKPKAQQRTAPKPVAAVRKRRKETARQRQRRRAMELRAAREAKQVRPEMIVVPEDNLTVQELADMLSIESSEIIKSLFFKGVIATVTQTLDMPTIEAVAKEFDVPVLQDDVEEAAKKTVEMIEEADLKHLIRRPPVVTVMGHVDHGKTSLLDAIRQARVAAGEAGGITQHIGAYQVEIQHKDEARKLTFLDTPGHAAFTAMRARGTKVTDVAVLVVAADDGVRPQTLEAISHARAAEVPIVVAINKIDKEGASADRVKQELSEQNLLAEEWGGDVVMVPVSAIKGENIDKLLEMLLLVTEVEDLQANPDRPARGTVIEAHLDKAKGPVATLLIQNGTLKTGDVLAAGPVLGKVRAMVDDNRQRLKEAGPSFAVEALGFSEVPTAGDEFEVYPDEKAARAVVGDRASNARATRLAQQMASRRVSLTAMSGQANEGELKELNLILKADVQGSVEAILGSLEQLPKDEVQVRVLLSAPGEITETDVDLAAASGAVIIGFNTSMASGAKKAADATGVDVRDYDVIYKLLEDIQLAMEGLLEPELIEEALGEAEVRAVFTIGKSAVAGCYVNTGKLHRNCRVRVHRGKQVVYTGDLDSLRRNKDDVKEVATGFECGVGADRFANWEEGDRIEAFKMVTQRRKLTT.

Low complexity-rich tracts occupy residues Ile32 to Ser44, Ala57 to Ser79, Ala94 to Ser166, and Lys193 to Thr235. 2 disordered regions span residues Ile32–Lys502 and Arg535–Arg567. Residues Ala251–Ala270 are compositionally biased toward pro residues. Composition is skewed to low complexity over residues Gly388–Arg409 and Asn439–Gly469. The segment covering Gly478–Arg492 has biased composition (basic and acidic residues). Basic residues predominate over residues Val553–Arg567. The 173-residue stretch at Arg668–Leu840 folds into the tr-type G domain. Positions Gly677–Thr684 are G1. Residue Gly677 to Thr684 participates in GTP binding. The segment at Gly702–His706 is G2. The tract at residues Asp727–Gly730 is G3. GTP contacts are provided by residues Asp727–His731 and Asn781–Asp784. Residues Asn781 to Asp784 are G4. The tract at residues Ser817–Ile819 is G5.

Belongs to the TRAFAC class translation factor GTPase superfamily. Classic translation factor GTPase family. IF-2 subfamily.

Its subcellular location is the cytoplasm. One of the essential components for the initiation of protein synthesis. Protects formylmethionyl-tRNA from spontaneous hydrolysis and promotes its binding to the 30S ribosomal subunits. Also involved in the hydrolysis of GTP during the formation of the 70S ribosomal complex. The protein is Translation initiation factor IF-2 of Synechococcus sp. (strain CC9902).